We begin with the raw amino-acid sequence, 152 residues long: Small ribosomal subunit protein uS13 (152 aa).

This sequence belongs to the universal ribosomal protein uS13 family. As to quaternary structure, part of the 30S ribosomal subunit. Forms a loose heterodimer with protein S19. Forms two bridges to the 50S subunit in the 70S ribosome.

Located at the top of the head of the 30S subunit, it contacts several helices of the 16S rRNA. In the 70S ribosome it contacts the 23S rRNA (bridge B1a) and protein L5 of the 50S subunit (bridge B1b), connecting the 2 subunits; these bridges are implicated in subunit movement. This chain is Small ribosomal subunit protein uS13, found in Pyrobaculum aerophilum (strain ATCC 51768 / DSM 7523 / JCM 9630 / CIP 104966 / NBRC 100827 / IM2).